Reading from the N-terminus, the 994-residue chain is Sarcoplasmic/endoplasmic reticulum calcium ATPase 1 (994 aa).

The Cytoplasmic portion of the chain corresponds to 1–48 (MEAAHSKSTEECLSYFGVSETTGLTPDQVKRHLEKYGPNELPAEEGKS). The chain crosses the membrane as a helical span at residues 49–69 (LWELVVEQFEDLLVRILLLAA). Topologically, residues 70-89 (CISFVLAWFEEGEETVTAFV) are lumenal. A helical transmembrane segment spans residues 90-110 (EPFVILLILIANAIVGVWQER). Residues 111–253 (NAENAIEALK…QDKTPLQQKL (143 aa)) are Cytoplasmic-facing. Residues 254 to 273 (DEFGEQLSKVISLICVAVWL) traverse the membrane as a helical segment. The Lumenal portion of the chain corresponds to 274-295 (INIGHFNDPVHGGSWFRGAIYY). A helical transmembrane segment spans residues 296 to 313 (FKIAVALAVAAIPEGLPA). Ca(2+) contacts are provided by valine 304, alanine 305, isoleucine 307, and glutamate 309. Residues 314-757 (VITTCLALGT…EEGRAIYNNM (444 aa)) lie on the Cytoplasmic side of the membrane. The 4-aspartylphosphate intermediate role is filled by aspartate 351. Residues aspartate 351 and threonine 353 each coordinate Mg(2+). Threonine 353 provides a ligand contact to ATP. Threonine 441 is subject to Phosphothreonine. Positions 442, 489, 515, and 560 each coordinate ATP. Position 569 is a phosphothreonine (threonine 569). Phosphoserine is present on serine 581. Threonine 625, glycine 626, and aspartate 627 together coordinate ATP. Residue serine 643 is modified to Phosphoserine. Residues arginine 678 and lysine 684 each contribute to the ATP site. Mg(2+) is bound at residue aspartate 703. Asparagine 706 is a binding site for ATP. A helical transmembrane segment spans residues 758–777 (KQFIRYLISSNVGEVVCIFL). Ca(2+) is bound by residues asparagine 768 and glutamate 771. Residues 778–787 (TAALGLPEAL) lie on the Lumenal side of the membrane. A helical membrane pass occupies residues 788–808 (IPVQLLWVNLVTDGLPATALG). The segment at 788–808 (IPVQLLWVNLVTDGLPATALG) is interaction with PLN. Positions 796, 799, and 800 each coordinate Ca(2+). Residues 809–828 (FNPPDLDIMDRPPRSPKEPL) lie on the Cytoplasmic side of the membrane. The helical transmembrane segment at 829-851 (ISGWLFFRYMAIGGYVGAATVGA) threads the bilayer. Over 852-897 (AAWWFLYAEDGPHVSYHQLTHFMQCTEHNPEFDGLDCEVFEAPEPM) the chain is Lumenal. The cysteines at positions 876 and 888 are disulfide-linked. A helical transmembrane segment spans residues 898–917 (TMALSVLVTIEMCNALNSLS). Glutamate 908 lines the Ca(2+) pocket. Residues 918–930 (ENQSLLRMPPWVN) lie on the Cytoplasmic side of the membrane. The helical transmembrane segment at 931 to 949 (IWLLGSICLSMSLHFLILY) threads the bilayer. Residues 932–943 (WLLGSICLSMSL) are interaction with PLN. The Lumenal portion of the chain corresponds to 950–964 (VDPLPMIFKLRALDF). A helical transmembrane segment spans residues 965–985 (TQWLMVLKISLPVIGLDELLK). Topologically, residues 986 to 994 (FIARNYLEG) are cytoplasmic.

This sequence belongs to the cation transport ATPase (P-type) (TC 3.A.3) family. Type IIA subfamily. As to quaternary structure, interacts with sarcolipin (SLN). Interacts with phospholamban (PLN). Interacts with myoregulin (MRLN). Interacts with DWORF. Interacts with VMP1. The cofactor is Mg(2+).

The protein localises to the endoplasmic reticulum membrane. The protein resides in the sarcoplasmic reticulum membrane. The catalysed reaction is Ca(2+)(in) + ATP + H2O = Ca(2+)(out) + ADP + phosphate + H(+). With respect to regulation, inhibited by sarcolipin (SLN) and myoregulin (MRLN). Has also been shown to be reversibly inhibited by phospholamban (PLN) at low calcium concentrations in vitro. Dephosphorylated PLN decreases the apparent affinity of the ATPase for calcium in vitro and this inhibition is regulated by the phosphorylation of PLN. Enhanced by DWORF; DWORF increases activity by displacing sarcolipin (SLN), phospholamban (PLN) and myoregulin (MRLN). In terms of biological role, key regulator of striated muscle performance by acting as the major Ca(2+) ATPase responsible for the reuptake of cytosolic Ca(2+) into the sarcoplasmic reticulum. Catalyzes the hydrolysis of ATP coupled with the translocation of calcium from the cytosol to the sarcoplasmic reticulum lumen. Contributes to calcium sequestration involved in muscular excitation/contraction. In Mus musculus (Mouse), this protein is Sarcoplasmic/endoplasmic reticulum calcium ATPase 1 (Atp2a1).